A 467-amino-acid chain; its full sequence is Ribulose bisphosphate carboxylase large chain (467 aa).

Lysine 6 carries the post-translational modification N6,N6,N6-trimethyllysine. Substrate-binding residues include asparagine 115 and threonine 165. The Proton acceptor role is filled by lysine 167. Lysine 169 is a binding site for substrate. Mg(2+)-binding residues include lysine 193, aspartate 195, and glutamate 196. Lysine 193 bears the N6-carboxylysine mark. Residue histidine 286 is the Proton acceptor of the active site. The substrate site is built by arginine 287, histidine 319, and serine 371.

Belongs to the RuBisCO large chain family. Type I subfamily. Heterohexadecamer of 8 large chains and 8 small chains; disulfide-linked. The disulfide link is formed within the large subunit homodimers. Mg(2+) is required as a cofactor. In terms of processing, the disulfide bond which can form in the large chain dimeric partners within the hexadecamer appears to be associated with oxidative stress and protein turnover.

The protein localises to the plastid. The protein resides in the chloroplast. It carries out the reaction 2 (2R)-3-phosphoglycerate + 2 H(+) = D-ribulose 1,5-bisphosphate + CO2 + H2O. The enzyme catalyses D-ribulose 1,5-bisphosphate + O2 = 2-phosphoglycolate + (2R)-3-phosphoglycerate + 2 H(+). Its function is as follows. RuBisCO catalyzes two reactions: the carboxylation of D-ribulose 1,5-bisphosphate, the primary event in carbon dioxide fixation, as well as the oxidative fragmentation of the pentose substrate in the photorespiration process. Both reactions occur simultaneously and in competition at the same active site. In Cedrus atlantica (Atlas cedar), this protein is Ribulose bisphosphate carboxylase large chain.